The primary structure comprises 277 residues: Carbonyl reductase [NADPH] 1 (277 aa).

N-acetylserine is present on Ser-2. Ser-2 and Ser-30 each carry phosphoserine. NADP(+)-binding positions include 10–34 (VTGG…GDVV), 63–64 (DI), and Asn-90. Glutathione is bound by residues 95–97 (FKV) and Gln-106. Ser-140 provides a ligand contact to substrate. Glutathione is bound at residue 193-194 (AY). Tyr-194 acts as the Proton acceptor in catalysis. Residues 194–198 (YGVTK) and 231–233 (VRT) each bind NADP(+). An N6-1-carboxyethyl lysine modification is found at Lys-239.

The protein belongs to the short-chain dehydrogenases/reductases (SDR) family. In terms of assembly, monomer.

Its subcellular location is the cytoplasm. The enzyme catalyses a secondary alcohol + NADP(+) = a ketone + NADPH + H(+). The catalysed reaction is prostaglandin F2alpha + NADP(+) = prostaglandin E2 + NADPH + H(+). It carries out the reaction prostaglandin E1 + NADP(+) = 15-oxoprostaglandin E1 + NADPH + H(+). It catalyses the reaction menadione + NADPH + H(+) = menadiol + NADP(+). The enzyme catalyses prostaglandin D2 + NADP(+) = 15-oxoprostaglandin D2 + NADPH + H(+). The catalysed reaction is prostaglandin E2 + NADP(+) = 15-oxoprostaglandin E2 + NADPH + H(+). It carries out the reaction prostaglandin F2alpha + NADP(+) = 15-oxoprostaglandin F2alpha + NADPH + H(+). It catalyses the reaction daunorubicin + NADPH + H(+) = 13-dihydrodaunorubicin + NADP(+). The enzyme catalyses S-nitrosoglutathione + NADPH + H(+) = S-(hydroxysulfenamide)glutathione + NADP(+). The catalysed reaction is a primary alcohol + NADP(+) = an aldehyde + NADPH + H(+). It carries out the reaction cortisol + NADPH + H(+) = 20beta-dihydrocortisol + NADP(+). It catalyses the reaction corticosterone + NADPH + H(+) = 20beta-dihydrocorticosterone + NADP(+). NADPH-dependent reductase with broad substrate specificity. Catalyzes the reduction of a wide variety of carbonyl compounds including quinones, prostaglandins, menadione, plus various xenobiotics. Catalyzes the reduction of the antitumor anthracyclines doxorubicin and daunorubicin to the cardiotoxic compounds doxorubicinol and daunorubicinol. Can convert prostaglandin E to prostaglandin F2-alpha. Can bind glutathione, which explains its higher affinity for glutathione-conjugated substrates. Catalyzes the reduction of S-nitrosoglutathione. In addition, participates in the glucocorticoid metabolism by catalyzing the NADPH-dependent cortisol/corticosterone into 20beta-dihydrocortisol (20b-DHF) or 20beta-corticosterone (20b-DHB), which are weak agonists of NR3C1 and NR3C2 in adipose tissue. This Pongo abelii (Sumatran orangutan) protein is Carbonyl reductase [NADPH] 1.